We begin with the raw amino-acid sequence, 387 residues long: Gamma-butyrobetaine dioxygenase (387 aa).

The Zn(2+) site is built by Cys-38, Cys-40, Cys-43, and His-82. His-202, Asp-204, and His-347 together coordinate Fe cation. At Ser-351 the chain carries Phosphoserine.

Belongs to the gamma-BBH/TMLD family. Fe(2+) is required as a cofactor. Requires L-ascorbate as cofactor. In terms of tissue distribution, expressed in the liver and in some extend in the testis and the epididymis.

Its subcellular location is the cytoplasm. The enzyme catalyses 4-(trimethylamino)butanoate + 2-oxoglutarate + O2 = carnitine + succinate + CO2. Its pathway is amine and polyamine biosynthesis; carnitine biosynthesis. In terms of biological role, catalyzes the formation of L-carnitine from gamma-butyrobetaine. The polypeptide is Gamma-butyrobetaine dioxygenase (Bbox1) (Rattus norvegicus (Rat)).